A 641-amino-acid polypeptide reads, in one-letter code: Ribosomal oxygenase 1 (641 aa).

M1 bears the N-acetylmethionine mark. Disordered stretches follow at residues 1–35 (MDGLQASAGPLRRGRPKRRRKPQPHSGSVLALPLR) and 54–80 (RTQTLPSENSEESRVESTADDLGDALP). Over residues 12–23 (RRGRPKRRRKPQ) the composition is skewed to basic residues. 3 positions are modified to phosphoserine: S60, S63, and S109. The 146-residue stretch at 294 to 439 (CSLRLLCPQA…DFLEAILPLA (146 aa)) folds into the JmjC domain. Fe cation-binding residues include H340, D342, and H405.

It belongs to the ROX family. NO66 subfamily. Interacts with SP7/OSX; the interaction is direct. Interacts with MYC. Interacts with PHF19; leading to its recruitment to H3K36me3 sites. Fe(2+) is required as a cofactor. As to expression, widely expressed. Overexpressed in lung carcinomas.

The protein localises to the nucleus. It localises to the nucleolus. Its subcellular location is the nucleoplasm. The catalysed reaction is N(6),N(6)-dimethyl-L-lysyl(36)-[histone H3] + 2 2-oxoglutarate + 2 O2 = L-lysyl(36)-[histone H3] + 2 formaldehyde + 2 succinate + 2 CO2. It carries out the reaction N(6)-methyl-L-lysyl-[protein] + 2-oxoglutarate + O2 = L-lysyl-[protein] + formaldehyde + succinate + CO2. The enzyme catalyses L-histidyl-[protein] + 2-oxoglutarate + O2 = (3S)-3-hydroxy-L-histidyl-[protein] + succinate + CO2. Oxygenase that can act as both a histone lysine demethylase and a ribosomal histidine hydroxylase. Specifically demethylates 'Lys-4' (H3K4me) and 'Lys-36' (H3K36me) of histone H3, thereby playing a central role in histone code. Preferentially demethylates trimethylated H3 'Lys-4' (H3K4me3) and monomethylated H3 'Lys-4' (H3K4me1) residues, while it has weaker activity for dimethylated H3 'Lys-36' (H3K36me2). Acts as a regulator of osteoblast differentiation via its interaction with SP7/OSX by demethylating H3K4me and H3K36me, thereby inhibiting SP7/OSX-mediated promoter activation. Also catalyzes demethylation of non-histone proteins, such as CGAS: demethylation of monomethylated CGAS promotes interaction between CGAS and PARP1, followed by PARP1 inactivation. Also catalyzes the hydroxylation of 60S ribosomal protein L8 on 'His-216', thereby playing a role in ribosome biogenesis. Participates in MYC-induced transcriptional activation. The chain is Ribosomal oxygenase 1 from Homo sapiens (Human).